Consider the following 78-residue polypeptide: ATP synthase subunit c (78 aa).

A run of 2 helical transmembrane segments spans residues 11–31 (FIGAGLATIGLGGAGIGVGHV) and 53–73 (LFVGIAFAEALGIFSFLIALL).

The protein belongs to the ATPase C chain family. In terms of assembly, F-type ATPases have 2 components, F(1) - the catalytic core - and F(0) - the membrane proton channel. F(1) has five subunits: alpha(3), beta(3), gamma(1), delta(1), epsilon(1). F(0) has four main subunits: a(1), b(1), b'(1) and c(10-14). The alpha and beta chains form an alternating ring which encloses part of the gamma chain. F(1) is attached to F(0) by a central stalk formed by the gamma and epsilon chains, while a peripheral stalk is formed by the delta, b and b' chains.

The protein resides in the cell inner membrane. In terms of biological role, f(1)F(0) ATP synthase produces ATP from ADP in the presence of a proton or sodium gradient. F-type ATPases consist of two structural domains, F(1) containing the extramembraneous catalytic core and F(0) containing the membrane proton channel, linked together by a central stalk and a peripheral stalk. During catalysis, ATP synthesis in the catalytic domain of F(1) is coupled via a rotary mechanism of the central stalk subunits to proton translocation. Its function is as follows. Key component of the F(0) channel; it plays a direct role in translocation across the membrane. A homomeric c-ring of between 10-14 subunits forms the central stalk rotor element with the F(1) delta and epsilon subunits. The polypeptide is ATP synthase subunit c (Cereibacter sphaeroides (strain ATCC 17025 / ATH 2.4.3) (Rhodobacter sphaeroides)).